A 1457-amino-acid chain; its full sequence is MDAAGEIQKVASMRLGGSMRGDSGSMWRRGDDVFSRSSREEDDEEALRWAALEKLPTYDRVRRAILPLGGDDGAGDGGGKGVVDVHGLGPRERRALLERLVRVADEDNEKFLLKLKDRVDRVGIDMPTIEVRFEHLEAEAEVRVGNSGLPTVLNSITNTLEEAGNALGILPNRKQTMPVLHDVSGIIKPRRMTLLLGPPGSGKTTLLLALAGRLGKDLKASGKVTYNGHGMEEFVPERTAAYISQHDLHIGEMTVRETLAFSARCQGVGSRFDMLTELSRREKAANIKPDADIDAFMKAAAMGGQEANVNTDYILKILGLEICADTMVGDEMLRGISGGQRKRVTTGEMLVGPARALFMDEISTGLDSSTTFQIVNSLRQTVHILGGTAVISLLQPAPETYNLFDDIILLSDGQIVYQGPREDVLEFFESTGFKCPDRKGVADFLQEVTSKKDQRQYWARHDKPYRFVTVKEFVSAFQSFHTGRAIANELAVPFDKSKSHPAALATTRYGAPGKELLKANIDREILLMKRNSFVYMFRTFQLMVVSLIAMTLFFRTKMKRDSVTSGGIYMGALFFGVLMIMFNGFSELALTVFKLPVFFKQRDLLFYPAWSYTIPSWILKIPITFIEVGGYVFLTYYVIGFDSNVGSFFKQYLLMLAINQMAGSLFRFIGGAARNMIVANVFASFMLLIFMVLGGFILAREQVKKWWIWGYWISPMMYAQNAISVNELMGHSWNKIVNSSASNETLGVQVLKSRGVFPEARWYWIGFGAMIGFTILFNALFTLALTYLRPYGNSRQSVSEEELKEKRANLNGEIVGDVHLSSGSTRRPMGNGTENDSTIVDDDTEVTQRGMVLPFTPLSLSFDNVRYSVDMPQEMKAQGVADDRLELLKGVSGSFRPGVLTALMGVSGAGKTTLMDVLAGRKTGGYIEGSINISGYPKKQETFARVSGYCEQNDIHSPQVTVYESLLFSAWLRLPEDVDSNTRKMFIEEVMELVELKSLRDALVGLPGVNGLSTEQRKRLTIAVELVANPSIIFMDEPTSGLDARAAAIVMRTVRNTVNTGRTVVCTIHQPSIDIFEAFDELFLMKRGGEEIYAGPLGHHSSELIKYFESIPGVSKIKDGYNPATWMLEVTTIGQEQALGVDFSDIYKKSELYQRNKALIKDLSQPAPDSSDLYFPTQYSQSSLTQCMACLWKQNLSYWRNPPYNAVRFFFTTVIALLFGTIFWDLGGKVTKSQDLFNAMGSMYAAVLFIGVMNCTSVQPVVAVERTVFYRERAAGMYSAFPYAFGQVVIEIPYTLVQATVYGIIVYAMIGFEWTAAKFFWYLFFMVFTLLYFTFYGMMAVGLTPNYHIASIVSSAFYAIWNLFSGFVIPRPRVPIWWRWYCWACPVAWTLYGLVVSQFGDIETPMEDGTPVKVFVENYFGFKHSWLGWVATVVAAFAFLFASLFGFAIMKFNFQKR.

The tract at residues 14–43 (RLGGSMRGDSGSMWRRGDDVFSRSSREEDD) is disordered. Positions 28–39 (RRGDDVFSRSSR) are enriched in basic and acidic residues. The region spanning 164-437 (GNALGILPNR…FESTGFKCPD (274 aa)) is the ABC transporter 1 domain. Residue 197 to 204 (GPPGSGKT) participates in ATP binding. Positions 515-728 (ELLKANIDRE…AQNAISVNEL (214 aa)) constitute an ABC transmembrane type-2 1 domain. The next 7 helical transmembrane spans lie at 533–553 (FVYM…MTLF), 565–585 (SGGI…FNGF), 621–641 (IPIT…VIGF), 653–673 (LLML…GGAA), 677–697 (IVAN…GGFI), 706–726 (WWIW…ISVN), and 765–785 (IGFG…TLAL). The tract at residues 821 to 841 (SSGSTRRPMGNGTENDSTIVD) is disordered. Residues 860 to 1112 (LSFDNVRYSV…ELIKYFESIP (253 aa)) form the ABC transporter 2 domain. 905 to 912 (GVSGAGKT) is a binding site for ATP. In terms of domain architecture, ABC transmembrane type-2 2 spans 1185–1399 (TQCMACLWKQ…TLYGLVVSQF (215 aa)). A run of 7 helical transmembrane segments spans residues 1209–1229 (FFFT…LGGK), 1244–1264 (YAAV…VVAV), 1292–1312 (IPYT…MIGF), 1319–1339 (FFWY…YGMM), 1349–1369 (IASI…GFVI), 1380–1400 (WYCW…SQFG), and 1429–1449 (WVAT…GFAI).

The protein belongs to the ABC transporter superfamily. ABCG family. PDR (TC 3.A.1.205) subfamily.

It localises to the membrane. In terms of biological role, may be a general defense protein. In Oryza sativa subsp. indica (Rice), this protein is ABC transporter G family member 36.